Reading from the N-terminus, the 108-residue chain is Small ribosomal subunit protein uS17 (108 aa).

It belongs to the universal ribosomal protein uS17 family. As to quaternary structure, part of the 30S ribosomal subunit.

In terms of biological role, one of the primary rRNA binding proteins, it binds specifically to the 5'-end of 16S ribosomal RNA. This is Small ribosomal subunit protein uS17 from Methanospirillum hungatei JF-1 (strain ATCC 27890 / DSM 864 / NBRC 100397 / JF-1).